The primary structure comprises 414 residues: MSKRRVVVTGMGMLSPVGNTVESSWKALLAGQSGIVNIEHFDTTNFSTRFAGLVKGFDCEQYMSKKDARKMDLFIQYGIAAGIQALEDSGLEVNEENAARIGVAIGSGIGGLELIETGHQALIEKGPRKVSPFFVPSTIVNMIAGNLSIMRGLRGPNIAISTACTTGLHNIGHAARMIAYGDADAMVAGGAEKASTPLGMAGFGAAKALSTRNDEPQKASRPWDKDRDGFVLGDGAGIMVLEEYEHAKARGAKIYAEVVGFGMSGDAYHMTSPSEDGSGGALAMEAAMRDAGVTGEQIGYVNAHGTSTPAGDVAEVKGIKRALGEAGTKQVLVSSTKSMTGHLLGAAGSVEAIITVMSLVDQMVPPTINLDNPEEGLGVDLVPHVARKVESMEYAMCNSFGFGGTNGSLIFKRM.

Positions 3–413 (KRRVVVTGMG…GTNGSLIFKR (411 aa)) constitute a Ketosynthase family 3 (KS3) domain. Active-site for beta-ketoacyl synthase activity residues include Cys164, His304, and His342.

It belongs to the thiolase-like superfamily. Beta-ketoacyl-ACP synthases family. Homodimer.

The catalysed reaction is a fatty acyl-[ACP] + malonyl-[ACP] + H(+) = a 3-oxoacyl-[ACP] + holo-[ACP] + CO2. It catalyses the reaction (9Z)-hexadecenoyl-[ACP] + malonyl-[ACP] + H(+) = 3-oxo-(11Z)-octadecenoyl-[ACP] + holo-[ACP] + CO2. It functions in the pathway lipid metabolism; fatty acid biosynthesis. In terms of biological role, involved in the type II fatty acid elongation cycle. Catalyzes the elongation of a wide range of acyl-ACP by the addition of two carbons from malonyl-ACP to an acyl acceptor. Can efficiently catalyze the conversion of palmitoleoyl-ACP (cis-hexadec-9-enoyl-ACP) to cis-vaccenoyl-ACP (cis-octadec-11-enoyl-ACP), an essential step in the thermal regulation of fatty acid composition. This Vibrio cholerae serotype O1 (strain ATCC 39315 / El Tor Inaba N16961) protein is 3-oxoacyl-[acyl-carrier-protein] synthase 2 (fabF).